Consider the following 860-residue polypeptide: Glucans biosynthesis glucosyltransferase H (860 aa).

6 helical membrane passes run 146–166 (ILLI…KGIL), 200–220 (ILLL…TALM), 519–539 (VFLT…FLVL), 576–596 (LFST…ILIW), 610–630 (TVSM…RMLF), and 686–706 (FLWW…VSVI).

It belongs to the glycosyltransferase 2 family. OpgH subfamily.

Its subcellular location is the cell inner membrane. It participates in glycan metabolism; osmoregulated periplasmic glucan (OPG) biosynthesis. Its function is as follows. Involved in the biosynthesis of osmoregulated periplasmic glucans (OPGs). The chain is Glucans biosynthesis glucosyltransferase H from Pseudomonas savastanoi pv. phaseolicola (strain 1448A / Race 6) (Pseudomonas syringae pv. phaseolicola (strain 1448A / Race 6)).